We begin with the raw amino-acid sequence, 1309 residues long: Mediator of RNA polymerase II transcription subunit 33A (1309 aa).

The disordered stretch occupies residues 809–829 (QTLNPVNSGTSSSSGAASEDS). Residues 816 to 826 (SGTSSSSGAAS) are compositionally biased toward low complexity.

The protein belongs to the Mediator complex subunit 33 family. As to quaternary structure, component of the Mediator complex.

The protein localises to the nucleus. Component of the Mediator complex, a coactivator involved in the regulated transcription of nearly all RNA polymerase II-dependent genes. Mediator functions as a bridge to convey information from gene-specific regulatory proteins to the basal RNA polymerase II transcription machinery. The Mediator complex, having a compact conformation in its free form, is recruited to promoters by direct interactions with regulatory proteins and serves for the assembly of a functional preinitiation complex with RNA polymerase II and the general transcription factors. Involved in the repression of phenylpropanoid biosynthesis. May compete with MED33B for common binding partners or for occupancy in Mediator. This Arabidopsis thaliana (Mouse-ear cress) protein is Mediator of RNA polymerase II transcription subunit 33A (MED33A).